The primary structure comprises 300 residues: Lipoyl synthase 2 (300 aa).

[4Fe-4S] cluster-binding residues include C46, C51, C57, C72, C76, C79, and S294. Residues Y58 to S283 form the Radical SAM core domain.

It belongs to the radical SAM superfamily. Lipoyl synthase family. The cofactor is [4Fe-4S] cluster.

The protein resides in the cytoplasm. The catalysed reaction is [[Fe-S] cluster scaffold protein carrying a second [4Fe-4S](2+) cluster] + N(6)-octanoyl-L-lysyl-[protein] + 2 oxidized [2Fe-2S]-[ferredoxin] + 2 S-adenosyl-L-methionine + 4 H(+) = [[Fe-S] cluster scaffold protein] + N(6)-[(R)-dihydrolipoyl]-L-lysyl-[protein] + 4 Fe(3+) + 2 hydrogen sulfide + 2 5'-deoxyadenosine + 2 L-methionine + 2 reduced [2Fe-2S]-[ferredoxin]. It participates in protein modification; protein lipoylation via endogenous pathway; protein N(6)-(lipoyl)lysine from octanoyl-[acyl-carrier-protein]: step 2/2. In terms of biological role, catalyzes the radical-mediated insertion of two sulfur atoms into the C-6 and C-8 positions of the octanoyl moiety bound to the lipoyl domains of lipoate-dependent enzymes, thereby converting the octanoylated domains into lipoylated derivatives. This Nostoc sp. (strain PCC 7120 / SAG 25.82 / UTEX 2576) protein is Lipoyl synthase 2.